A 257-amino-acid chain; its full sequence is 3-deoxy-manno-octulosonate cytidylyltransferase (257 aa).

The protein belongs to the KdsB family.

It is found in the cytoplasm. It catalyses the reaction 3-deoxy-alpha-D-manno-oct-2-ulosonate + CTP = CMP-3-deoxy-beta-D-manno-octulosonate + diphosphate. It functions in the pathway nucleotide-sugar biosynthesis; CMP-3-deoxy-D-manno-octulosonate biosynthesis; CMP-3-deoxy-D-manno-octulosonate from 3-deoxy-D-manno-octulosonate and CTP: step 1/1. Its pathway is bacterial outer membrane biogenesis; lipopolysaccharide biosynthesis. Its function is as follows. Activates KDO (a required 8-carbon sugar) for incorporation into bacterial lipopolysaccharide in Gram-negative bacteria. This Xylella fastidiosa (strain 9a5c) protein is 3-deoxy-manno-octulosonate cytidylyltransferase.